The following is a 516-amino-acid chain: Endoglucanase 17 (516 aa).

Positions 1–29 (MALLLVSSSSSYALRVTIFLSFFFFLCNG) are cleaved as a signal peptide. The active-site Nucleophile is the Asp-105. Residues His-433, Asp-484, and Glu-493 contribute to the active site.

The protein belongs to the glycosyl hydrolase 9 (cellulase E) family.

The protein resides in the secreted. The enzyme catalyses Endohydrolysis of (1-&gt;4)-beta-D-glucosidic linkages in cellulose, lichenin and cereal beta-D-glucans.. The chain is Endoglucanase 17 from Arabidopsis thaliana (Mouse-ear cress).